The sequence spans 150 residues: Transthyretin (150 aa).

The signal sequence occupies residues 1-20; that stretch reads MAFHSMLLVFLAGLVFLTEA. Residue cysteine 33 is modified to Sulfocysteine. Positions 38, 77, and 140 each coordinate L-thyroxine.

It belongs to the transthyretin family. Homotetramer. Dimer of dimers. In the homotetramer, subunits assemble around a central channel that can accommodate two ligand molecules. Interacts with RBP4. In terms of processing, sulfonation of the reactive cysteine Cys-33 enhances the stability of the native conformation of TTR, avoiding misassembly of the protein leading to amyloid formation. In terms of tissue distribution, strongly expressed in the brain, and to a lesser extent in the eye.

It is found in the secreted. Its function is as follows. Thyroid hormone-binding protein, with a much higher binding affinity for triiodothyronine (T3) than for thyroxine (T4). Probably transports triiodothyronine from the bloodstream to the brain. The chain is Transthyretin (TTR) from Crocodylus porosus (Saltwater crocodile).